Consider the following 78-residue polypeptide: Acyl carrier protein (78 aa).

In terms of domain architecture, Carrier spans 2-77 (STIEERVKKI…AAIDYVNSHK (76 aa)). The residue at position 37 (Ser-37) is an O-(pantetheine 4'-phosphoryl)serine.

It belongs to the acyl carrier protein (ACP) family. 4'-phosphopantetheine is transferred from CoA to a specific serine of apo-ACP by AcpS. This modification is essential for activity because fatty acids are bound in thioester linkage to the sulfhydryl of the prosthetic group.

It localises to the cytoplasm. The protein operates within lipid metabolism; fatty acid biosynthesis. Its function is as follows. Carrier of the growing fatty acid chain in fatty acid biosynthesis. The polypeptide is Acyl carrier protein (Pseudomonas putida (strain GB-1)).